Here is a 401-residue protein sequence, read N- to C-terminus: Insertion element ISM1 uncharacterized 48.3 kDa protein (401 aa).

Its function is as follows. This polypeptide is involved in transposition, and should therefore bind to nucleic acids. The chain is Insertion element ISM1 uncharacterized 48.3 kDa protein from Methanobrevibacter smithii.